The primary structure comprises 705 residues: Elongation factor G (705 aa).

A tr-type G domain is found at 7–287; the sequence is HLTRNIGIMA…YVCAFLPSPL (281 aa). Residues 16–23, 84–88, and 138–141 contribute to the GTP site; these read AHIDAGKT, DTPGH, and NKMD.

The protein belongs to the TRAFAC class translation factor GTPase superfamily. Classic translation factor GTPase family. EF-G/EF-2 subfamily.

It is found in the cytoplasm. Its function is as follows. Catalyzes the GTP-dependent ribosomal translocation step during translation elongation. During this step, the ribosome changes from the pre-translocational (PRE) to the post-translocational (POST) state as the newly formed A-site-bound peptidyl-tRNA and P-site-bound deacylated tRNA move to the P and E sites, respectively. Catalyzes the coordinated movement of the two tRNA molecules, the mRNA and conformational changes in the ribosome. In Bacteroides thetaiotaomicron (strain ATCC 29148 / DSM 2079 / JCM 5827 / CCUG 10774 / NCTC 10582 / VPI-5482 / E50), this protein is Elongation factor G.